Consider the following 520-residue polypeptide: Ribonuclease Y (520 aa).

Residues 1–3 (MTP) are Extracellular-facing. A helical transmembrane segment spans residues 4-24 (IMMVLISILLILLGLVVGYFV). The Cytoplasmic segment spans residues 25–520 (RKTIAEAKIA…RETRAVEYAK (496 aa)). Residues 29–141 (AEAKIAGARG…KVDEMIRMQQ (113 aa)) are a coiled coil. The region spanning 210–273 (TVSVVNLPND…ETARIALDKL (64 aa)) is the KH domain. One can recognise an HD domain in the interval 336–429 (VLKHSMEVAF…VAAADALSAA (94 aa)).

Belongs to the RNase Y family. In terms of assembly, homodimer. Component of a possible RNA degradosome complex composed of rny, rnjA, rnjB, pnp, pfkA and eno (although rnjA and rnjB's presence is unclear). Interacts with RNA helicase CshA which may also be a member of the RNA degradosome complex. Interacts with full-length dynamin-like protein DynA. Mg(2+) serves as cofactor. It depends on Mn(2+) as a cofactor. The cofactor is Zn(2+).

It localises to the cell membrane. With respect to regulation, shows preference for transcripts carrying a monophosphate group at the 5' end. In terms of biological role, endoribonuclease that initiates mRNA decay. Initiates the decay of all SAM-dependent riboswitches, such as yitJ riboswitch. Involved in processing of the gapA operon mRNA, it cleaves between cggR and gapA. Is also the decay-initiating endonuclease for rpsO mRNA. Involved in degradation of type I toxin-antitoxin system bsrG/SR4 RNAs and a minor role in degradation of type I toxin-antitoxin system bsrE/SR5 degradation. This is Ribonuclease Y (rny) from Bacillus subtilis (strain 168).